A 482-amino-acid polypeptide reads, in one-letter code: tRNA sulfurtransferase (482 aa).

The region spanning 61-165 (LTIRDALTRI…DDRLLLIKGR (105 aa)) is the THUMP domain. ATP contacts are provided by residues 183 to 184 (LI), Lys265, Gly287, and Gln296. Cysteines 344 and 456 form a disulfide. Residues 404–482 (CGPNDVILDI…GFNNVKVYRP (79 aa)) form the Rhodanese domain. Cys456 functions as the Cysteine persulfide intermediate in the catalytic mechanism.

It belongs to the ThiI family.

The protein localises to the cytoplasm. It catalyses the reaction [ThiI sulfur-carrier protein]-S-sulfanyl-L-cysteine + a uridine in tRNA + 2 reduced [2Fe-2S]-[ferredoxin] + ATP + H(+) = [ThiI sulfur-carrier protein]-L-cysteine + a 4-thiouridine in tRNA + 2 oxidized [2Fe-2S]-[ferredoxin] + AMP + diphosphate. It carries out the reaction [ThiS sulfur-carrier protein]-C-terminal Gly-Gly-AMP + S-sulfanyl-L-cysteinyl-[cysteine desulfurase] + AH2 = [ThiS sulfur-carrier protein]-C-terminal-Gly-aminoethanethioate + L-cysteinyl-[cysteine desulfurase] + A + AMP + 2 H(+). It participates in cofactor biosynthesis; thiamine diphosphate biosynthesis. Its function is as follows. Catalyzes the ATP-dependent transfer of a sulfur to tRNA to produce 4-thiouridine in position 8 of tRNAs, which functions as a near-UV photosensor. Also catalyzes the transfer of sulfur to the sulfur carrier protein ThiS, forming ThiS-thiocarboxylate. This is a step in the synthesis of thiazole, in the thiamine biosynthesis pathway. The sulfur is donated as persulfide by IscS. The sequence is that of tRNA sulfurtransferase from Shigella dysenteriae serotype 1 (strain Sd197).